Here is a 377-residue protein sequence, read N- to C-terminus: RING-H2 finger protein ATL22 (377 aa).

A signal peptide spans 1–23; that stretch reads MTSKLLPLLLNLIFLFFFPLLNA. A helical transmembrane segment spans residues 244 to 264; it reads IMCLSLVGPLTALTFCVGLVM. Residues 327–369 form an RING-type; atypical zinc finger; sequence CPICLSEYATKETVRCLPECEHCFHTECIDAWLKLHSSCPVCR.

It belongs to the RING-type zinc finger family. ATL subfamily.

Its subcellular location is the membrane. The catalysed reaction is S-ubiquitinyl-[E2 ubiquitin-conjugating enzyme]-L-cysteine + [acceptor protein]-L-lysine = [E2 ubiquitin-conjugating enzyme]-L-cysteine + N(6)-ubiquitinyl-[acceptor protein]-L-lysine.. It functions in the pathway protein modification; protein ubiquitination. The chain is RING-H2 finger protein ATL22 (ATL22) from Arabidopsis thaliana (Mouse-ear cress).